The following is a 222-amino-acid chain: Probable transaldolase (222 aa).

Catalysis depends on Lys-91, which acts as the Schiff-base intermediate with substrate.

It belongs to the transaldolase family. Type 3B subfamily.

It is found in the cytoplasm. It catalyses the reaction D-sedoheptulose 7-phosphate + D-glyceraldehyde 3-phosphate = D-erythrose 4-phosphate + beta-D-fructose 6-phosphate. The protein operates within carbohydrate degradation; pentose phosphate pathway; D-glyceraldehyde 3-phosphate and beta-D-fructose 6-phosphate from D-ribose 5-phosphate and D-xylulose 5-phosphate (non-oxidative stage): step 2/3. Functionally, transaldolase is important for the balance of metabolites in the pentose-phosphate pathway. The chain is Probable transaldolase from Chlorobium phaeovibrioides (strain DSM 265 / 1930) (Prosthecochloris vibrioformis (strain DSM 265)).